Reading from the N-terminus, the 657-residue chain is Protein mono-ADP-ribosyltransferase TIPARP (657 aa).

The segment covering 1–10 has biased composition (acidic residues); it reads MEVETTEPEP. A disordered region spans residues 1 to 22; that stretch reads MEVETTEPEPDCVVQPPSPSDD. ADP-ribosylcysteine is present on Cys39. The short motif at 41 to 48 is the Nuclear localization signal element; the sequence is KKKQEQKR. Residues 121-154 form a disordered region; it reads QLPEAHPSTDAPEQGVPIQDHSFPPETISGTVAD. Residues 238 to 265 form a C3H1-type zinc finger; that stretch reads ENGIEICMDFLQGTCIYGRDCLKHHTVL. One can recognise a WWE domain in the interval 333–411; that stretch reads STPPCSNSNS…RRPLFRSCFI (79 aa). The 209-residue stretch at 449 to 657 folds into the PARP catalytic domain; the sequence is YPETWVYMHP…YEEVSNTVSI (209 aa).

The protein belongs to the ARTD/PARP family. As to quaternary structure, interacts with AHR. In terms of processing, auto-mono-ADP-ribosylated. Ubiquitously expressed.

Its subcellular location is the nucleus. The catalysed reaction is L-aspartyl-[protein] + NAD(+) = 4-O-(ADP-D-ribosyl)-L-aspartyl-[protein] + nicotinamide. It carries out the reaction L-glutamyl-[protein] + NAD(+) = 5-O-(ADP-D-ribosyl)-L-glutamyl-[protein] + nicotinamide. It catalyses the reaction L-cysteinyl-[protein] + NAD(+) = S-(ADP-D-ribosyl)-L-cysteinyl-[protein] + nicotinamide + H(+). ADP-ribosyltransferase that mediates mono-ADP-ribosylation of glutamate, aspartate and cysteine residues on target proteins. Acts as a negative regulator of AHR by mediating mono-ADP-ribosylation of AHR, leading to inhibit transcription activator activity of AHR. The protein is Protein mono-ADP-ribosyltransferase TIPARP of Mus musculus (Mouse).